Here is a 982-residue protein sequence, read N- to C-terminus: Filament-like plant protein 4 (982 aa).

2 coiled-coil regions span residues 39 to 83 (DQYT…VAKE) and 125 to 291 (EDRA…RKKL). A disordered region spans residues 311–333 (DHRQDHRQRRSPVRPSSPLMSPM). Over residues 323-333 (VRPSSPLMSPM) the composition is skewed to low complexity. Residues 345–401 (DNMQKFHKENDLLTERLLAMEEETKMLKEALAKRNSELQVSRNLCAKTANRLQTLEA) adopt a coiled-coil conformation. Polar residues predominate over residues 423-433 (QNASNPPSMAS). 2 disordered regions span residues 423–466 (QNAS…AKIK) and 687–711 (QKDSSGEHYQNGCSQSSDSEIPDDC). The stretch at 452–475 (ELSQSNKDKANAKIKKTESANQLE) forms a coiled coil. A compositionally biased stretch (basic and acidic residues) spans 457-466 (NKDKANAKIK). Positions 693 to 705 (EHYQNGCSQSSDS) are enriched in polar residues. Residues 722–885 (ATCKFTTEEF…AECQETILLL (164 aa)) are a coiled coil. Composition is skewed to polar residues over residues 896 to 910 (TEQVASSPSQEQQAL) and 918 to 943 (ATSTNPQDSKLSSPSDKDTPSMNTMK). The disordered stretch occupies residues 896 to 982 (TEQVASSPSQ…FSRFFSTKAK (87 aa)).

The protein belongs to the FPP family. In terms of assembly, interacts with WPP/MAF proteins.

The chain is Filament-like plant protein 4 (FPP4) from Arabidopsis thaliana (Mouse-ear cress).